The sequence spans 496 residues: Probable malate:quinone oxidoreductase (496 aa).

It belongs to the MQO family. Requires FAD as cofactor.

It carries out the reaction (S)-malate + a quinone = a quinol + oxaloacetate. Its pathway is carbohydrate metabolism; tricarboxylic acid cycle; oxaloacetate from (S)-malate (quinone route): step 1/1. This is Probable malate:quinone oxidoreductase from Prochlorococcus marinus (strain MIT 9313).